Consider the following 206-residue polypeptide: Large ribosomal subunit protein uL4 (206 aa).

Residues 43 to 78 are disordered; it reads ARSGNRKQKDREEVHHTTKKPWRQKGTGRARAGMSS. Over residues 49-58 the composition is skewed to basic and acidic residues; the sequence is KQKDREEVHH. A compositionally biased stretch (basic residues) spans 59-70; sequence TTKKPWRQKGTG.

The protein belongs to the universal ribosomal protein uL4 family. As to quaternary structure, part of the 50S ribosomal subunit.

Functionally, one of the primary rRNA binding proteins, this protein initially binds near the 5'-end of the 23S rRNA. It is important during the early stages of 50S assembly. It makes multiple contacts with different domains of the 23S rRNA in the assembled 50S subunit and ribosome. In terms of biological role, forms part of the polypeptide exit tunnel. The polypeptide is Large ribosomal subunit protein uL4 (Janthinobacterium sp. (strain Marseille) (Minibacterium massiliensis)).